The following is a 367-amino-acid chain: F-box only protein 25 (367 aa).

The interaction with beta-actin stretch occupies residues 1–83 (MPFLGQDWRS…NDTNTQSFYR (83 aa)). Residues 226–274 (LTLSDLPLHMLNNILYRFSDGWDIITLGQVTPTLYMLSEDRQLWKKLCQ) form the F-box domain.

In terms of assembly, part of a SCF (SKP1-cullin-F-box) protein ligase complex consisting of FBXO25, SKP1, CUL1 and RBX1. Interacts directly with SKP1 and CUL1. Interacts (via C-terminus) with beta-actin (via N-terminus). In terms of tissue distribution, expressed in all brain tissue observed.

The protein localises to the nucleus. It functions in the pathway protein modification; protein ubiquitination. In terms of biological role, substrate-recognition component of the SCF (SKP1-CUL1-F-box protein)-type E3 ubiquitin ligase complex. May play a role in accumulation of expanded polyglutamine (polyQ) protein huntingtin (HTT). This is F-box only protein 25 (FBXO25) from Homo sapiens (Human).